The sequence spans 301 residues: Tyrosine recombinase XerC (301 aa).

A Core-binding (CB) domain is found at 2–84 (TNTQFYITNF…TLRSFFSYLY (83 aa)). Positions 105–291 (ALPKFLTVDD…DLKHLIEVYD (187 aa)) constitute a Tyr recombinase domain. Active-site residues include arginine 145, lysine 169, histidine 243, arginine 246, and histidine 269. Catalysis depends on tyrosine 278, which acts as the O-(3'-phospho-DNA)-tyrosine intermediate.

This sequence belongs to the 'phage' integrase family. XerC subfamily. In terms of assembly, forms a cyclic heterotetrameric complex composed of two molecules of XerC and two molecules of XerD.

The protein resides in the cytoplasm. Its function is as follows. Site-specific tyrosine recombinase, which acts by catalyzing the cutting and rejoining of the recombining DNA molecules. The XerC-XerD complex is essential to convert dimers of the bacterial chromosome into monomers to permit their segregation at cell division. It also contributes to the segregational stability of plasmids. The sequence is that of Tyrosine recombinase XerC from Thermodesulfovibrio yellowstonii (strain ATCC 51303 / DSM 11347 / YP87).